The following is a 152-amino-acid chain: MNFEGKLLGQDLKIGIVVSRFNDFITGRLLDGAKDVLVRHEVESEKIDVAFVPGAFEIPLAAKKLAETGKYDAVITLGCVIRGATSHYDYVCNEVAKGVSKVSDTTGLPVIFGVLTTETIEQAVERAGTKAGNKGAEAAMAAIEMANLLKSI.

Residues phenylalanine 21, 55-57, and 79-81 contribute to the 5-amino-6-(D-ribitylamino)uracil site; these read AFE and CVI. 84–85 lines the (2S)-2-hydroxy-3-oxobutyl phosphate pocket; sequence AT. The active-site Proton donor is histidine 87. Phenylalanine 112 is a binding site for 5-amino-6-(D-ribitylamino)uracil. Residue arginine 126 participates in (2S)-2-hydroxy-3-oxobutyl phosphate binding.

The protein belongs to the DMRL synthase family. Forms an icosahedral capsid composed of 60 subunits, arranged as a dodecamer of pentamers.

It carries out the reaction (2S)-2-hydroxy-3-oxobutyl phosphate + 5-amino-6-(D-ribitylamino)uracil = 6,7-dimethyl-8-(1-D-ribityl)lumazine + phosphate + 2 H2O + H(+). It participates in cofactor biosynthesis; riboflavin biosynthesis; riboflavin from 2-hydroxy-3-oxobutyl phosphate and 5-amino-6-(D-ribitylamino)uracil: step 1/2. Catalyzes the formation of 6,7-dimethyl-8-ribityllumazine by condensation of 5-amino-6-(D-ribitylamino)uracil with 3,4-dihydroxy-2-butanone 4-phosphate. This is the penultimate step in the biosynthesis of riboflavin. This is 6,7-dimethyl-8-ribityllumazine synthase from Staphylococcus carnosus (strain TM300).